A 387-amino-acid polypeptide reads, in one-letter code: Sorting nexin-7 (387 aa).

The PX domain maps to 30 to 151 (KDLFITVDEP…IFLTAQAWEL (122 aa)). Residues arginine 73, glutamine 75, lysine 103, and arginine 117 each contribute to the a 1,2-diacyl-sn-glycero-3-phospho-(1D-myo-inositol-3-phosphate) site. Residues 178–387 (GVKNRPEEFM…HLEETSEDKP (210 aa)) enclose the BAR domain.

Belongs to the sorting nexin family. Heterodimer; heterodimerizes with SNX4.

It localises to the early endosome membrane. Involved in the regulation of endocytosis and in several stages of intracellular trafficking. Together with SNX4, involved in autophagosome assembly by regulating trafficking and recycling of phospholipid scramblase ATG9A. The polypeptide is Sorting nexin-7 (SNX7) (Macaca fascicularis (Crab-eating macaque)).